The sequence spans 290 residues: Eukaryotic translation initiation factor 3 subunit F-2 (290 aa).

Residues 12 to 150 (VRLQPLVLFQ…TRLYCAVTMG (139 aa)) form the MPN domain.

It belongs to the eIF-3 subunit F family. Component of the eukaryotic translation initiation factor 3 (eIF-3) complex. The eIF-3 complex interacts with pix.

It localises to the cytoplasm. In terms of biological role, component of the eukaryotic translation initiation factor 3 (eIF-3) complex, which is involved in protein synthesis of a specialized repertoire of mRNAs and, together with other initiation factors, stimulates binding of mRNA and methionyl-tRNAi to the 40S ribosome. The eIF-3 complex specifically targets and initiates translation of a subset of mRNAs involved in cell proliferation. In Drosophila mojavensis (Fruit fly), this protein is Eukaryotic translation initiation factor 3 subunit F-2.